Consider the following 100-residue polypeptide: Urease subunit gamma (100 aa).

This sequence belongs to the urease gamma subunit family. In terms of assembly, heterotrimer of UreA (gamma), UreB (beta) and UreC (alpha) subunits. Three heterotrimers associate to form the active enzyme.

The protein localises to the cytoplasm. The catalysed reaction is urea + 2 H2O + H(+) = hydrogencarbonate + 2 NH4(+). The protein operates within nitrogen metabolism; urea degradation; CO(2) and NH(3) from urea (urease route): step 1/1. In Shewanella halifaxensis (strain HAW-EB4), this protein is Urease subunit gamma.